A 253-amino-acid polypeptide reads, in one-letter code: Imidazole glycerol phosphate synthase subunit HisF (253 aa).

Residues aspartate 11 and aspartate 130 contribute to the active site.

Belongs to the HisA/HisF family. As to quaternary structure, heterodimer of HisH and HisF.

It is found in the cytoplasm. It catalyses the reaction 5-[(5-phospho-1-deoxy-D-ribulos-1-ylimino)methylamino]-1-(5-phospho-beta-D-ribosyl)imidazole-4-carboxamide + L-glutamine = D-erythro-1-(imidazol-4-yl)glycerol 3-phosphate + 5-amino-1-(5-phospho-beta-D-ribosyl)imidazole-4-carboxamide + L-glutamate + H(+). Its pathway is amino-acid biosynthesis; L-histidine biosynthesis; L-histidine from 5-phospho-alpha-D-ribose 1-diphosphate: step 5/9. IGPS catalyzes the conversion of PRFAR and glutamine to IGP, AICAR and glutamate. The HisF subunit catalyzes the cyclization activity that produces IGP and AICAR from PRFAR using the ammonia provided by the HisH subunit. The chain is Imidazole glycerol phosphate synthase subunit HisF from Ruminiclostridium cellulolyticum (strain ATCC 35319 / DSM 5812 / JCM 6584 / H10) (Clostridium cellulolyticum).